The primary structure comprises 270 residues: uncharacterized protein (270 aa).

One can recognise an ABC transporter domain in the interval 34–266 (LIARGLTKSY…PDVRRLYLGD (233 aa)). 66–73 (GPNGAGKT) lines the ATP pocket.

This sequence belongs to the ABC transporter superfamily.

This is an uncharacterized protein from Rhizobium meliloti (strain 1021) (Ensifer meliloti).